A 250-amino-acid chain; its full sequence is Type III pantothenate kinase (250 aa).

13 to 20 contacts ATP; that stretch reads DVGNSYLK. A substrate-binding site is contributed by 110-113; that stretch reads GNDL. Asp112 acts as the Proton acceptor in catalysis. Residue Thr134 coordinates ATP. A substrate-binding site is contributed by Thr186.

The protein belongs to the type III pantothenate kinase family. In terms of assembly, homodimer. The cofactor is NH4(+). K(+) serves as cofactor.

Its subcellular location is the cytoplasm. It carries out the reaction (R)-pantothenate + ATP = (R)-4'-phosphopantothenate + ADP + H(+). Its pathway is cofactor biosynthesis; coenzyme A biosynthesis; CoA from (R)-pantothenate: step 1/5. Functionally, catalyzes the phosphorylation of pantothenate (Pan), the first step in CoA biosynthesis. The protein is Type III pantothenate kinase of Mycoplasmopsis synoviae (strain 53) (Mycoplasma synoviae).